The following is a 172-amino-acid chain: Transcriptional repressor NrdR (172 aa).

Residues 3 to 34 (CPFCGAPDTRVIDSRLAGEGDQVRRRRECLSC) fold into a zinc finger. The ATP-cone domain maps to 49–139 (PRVVKRDGSR…VYLSFADVQA (91 aa)).

This sequence belongs to the NrdR family. Zn(2+) serves as cofactor.

In terms of biological role, negatively regulates transcription of bacterial ribonucleotide reductase nrd genes and operons by binding to NrdR-boxes. This is Transcriptional repressor NrdR from Thioalkalivibrio sulfidiphilus (strain HL-EbGR7).